A 430-amino-acid polypeptide reads, in one-letter code: Asparagine--tRNA ligase (430 aa).

Belongs to the class-II aminoacyl-tRNA synthetase family. Homodimer.

The protein resides in the cytoplasm. The enzyme catalyses tRNA(Asn) + L-asparagine + ATP = L-asparaginyl-tRNA(Asn) + AMP + diphosphate + H(+). In Staphylococcus aureus (strain MSSA476), this protein is Asparagine--tRNA ligase.